A 187-amino-acid polypeptide reads, in one-letter code: Cerebral dopamine neurotrophic factor (187 aa).

Residues 1-24 form the signal peptide; that stretch reads MRCTSPAALVTFCAGLWISNHVLA. 3 disulfide bridges follow: Cys-37-Cys-124, Cys-40-Cys-113, and Cys-71-Cys-82.

It belongs to the ARMET family.

The protein localises to the secreted. Its function is as follows. Trophic factor for dopamine neurons. Prevents the 6-hydroxydopamine (6-OHDA)-induced degeneration of dopaminergic neurons. When administered after 6-OHDA-lesioning, restores the dopaminergic function and prevents the degeneration of dopaminergic neurons in substantia nigra. The chain is Cerebral dopamine neurotrophic factor (Cdnf) from Rattus norvegicus (Rat).